The chain runs to 303 residues: uncharacterized protein (303 aa).

This is an uncharacterized protein from Leptospira interrogans.